The primary structure comprises 121 residues: Small ribosomal subunit protein uS13 (121 aa).

The segment at 93–121 (KGLPMRGQRTRTNARTRKGPRRAAQALKK) is disordered.

This sequence belongs to the universal ribosomal protein uS13 family. As to quaternary structure, part of the 30S ribosomal subunit. Forms a loose heterodimer with protein S19. Forms two bridges to the 50S subunit in the 70S ribosome.

Located at the top of the head of the 30S subunit, it contacts several helices of the 16S rRNA. In the 70S ribosome it contacts the 23S rRNA (bridge B1a) and protein L5 of the 50S subunit (bridge B1b), connecting the 2 subunits; these bridges are implicated in subunit movement. Contacts the tRNAs in the A and P-sites. This chain is Small ribosomal subunit protein uS13, found in Burkholderia ambifaria (strain ATCC BAA-244 / DSM 16087 / CCUG 44356 / LMG 19182 / AMMD) (Burkholderia cepacia (strain AMMD)).